Here is a 240-residue protein sequence, read N- to C-terminus: Zein-alpha M6 (240 aa).

The signal sequence occupies residues 1–21 (MATKIFSLLMLLALSTCVANA).

The protein belongs to the zein family.

In terms of biological role, zeins are major seed storage proteins. The polypeptide is Zein-alpha M6 (Zea mays (Maize)).